Here is a 346-residue protein sequence, read N- to C-terminus: Biotin synthase (346 aa).

The Radical SAM core domain maps to 38-256; that stretch reads QQVQVSTLLS…IAVARIMMPT (219 aa). Residues Cys53, Cys57, and Cys60 each contribute to the [4Fe-4S] cluster site. [2Fe-2S] cluster is bound by residues Cys97, Cys128, Cys188, and Arg260.

The protein belongs to the radical SAM superfamily. Biotin synthase family. In terms of assembly, homodimer. Requires [4Fe-4S] cluster as cofactor. [2Fe-2S] cluster serves as cofactor.

It carries out the reaction (4R,5S)-dethiobiotin + (sulfur carrier)-SH + 2 reduced [2Fe-2S]-[ferredoxin] + 2 S-adenosyl-L-methionine = (sulfur carrier)-H + biotin + 2 5'-deoxyadenosine + 2 L-methionine + 2 oxidized [2Fe-2S]-[ferredoxin]. The protein operates within cofactor biosynthesis; biotin biosynthesis; biotin from 7,8-diaminononanoate: step 2/2. Catalyzes the conversion of dethiobiotin (DTB) to biotin by the insertion of a sulfur atom into dethiobiotin via a radical-based mechanism. This is Biotin synthase from Citrobacter koseri (strain ATCC BAA-895 / CDC 4225-83 / SGSC4696).